Reading from the N-terminus, the 395-residue chain is Methylthioribose-1-phosphate isomerase (395 aa).

Aspartate 258 (proton donor) is an active-site residue.

Belongs to the eIF-2B alpha/beta/delta subunits family. MtnA subfamily.

The protein localises to the cytoplasm. It is found in the nucleus. The catalysed reaction is 5-(methylsulfanyl)-alpha-D-ribose 1-phosphate = 5-(methylsulfanyl)-D-ribulose 1-phosphate. Its pathway is amino-acid biosynthesis; L-methionine biosynthesis via salvage pathway; L-methionine from S-methyl-5-thio-alpha-D-ribose 1-phosphate: step 1/6. Its function is as follows. Catalyzes the interconversion of methylthioribose-1-phosphate (MTR-1-P) into methylthioribulose-1-phosphate (MTRu-1-P). The chain is Methylthioribose-1-phosphate isomerase from Podospora anserina (strain S / ATCC MYA-4624 / DSM 980 / FGSC 10383) (Pleurage anserina).